The following is a 384-amino-acid chain: MPENYTPAAAATGTWTEEEIRHQPRAWIRSLTNIDALHSALNNFLEPLLRKENLRIILTGAGTSAFIGDIIAPWLASHTGKNFSAVPTTDLVTNPMDYLNPAHPLLLISFGRSGNSPESVAAVELANQFVPECYHLPITCNEAGALYQNAINSDNAFAVLMPAETHDRGFAMTSSITTMMASCLAVFAPETINSQTFRDVADRCQAILTSLGDFSEGVFGYAPWKRIVYLGSGGLQGAARESALKVLELTAGKLAAFYDSPTGFRHGPKSLVDNETLVVVFVSSHPYTRQYDLDLLAELHRDNQAMRVIAIAAESSDIVAAGPHIILPPSRHFIDVEQAFCFLMYAQTFALMQSLHMGNTPDTPSASGTVNRVVQGVIIHPWQA.

SIS domains follow at residues 45-197 and 215-364; these read LEPL…SQTF and SEGV…PDTP.

It belongs to the SIS family. AgaS subfamily.

The enzyme catalyses D-galactosamine 6-phosphate + H2O = D-tagatopyranose 1-phosphate + NH4(+). Its function is as follows. Catalyzes the isomerization-deamination of galactosamine 6-phosphate to form tagatofuranose 6-phosphate and ammonium ion. This Escherichia coli O157:H7 protein is D-galactosamine-6-phosphate deaminase AgaS.